The primary structure comprises 130 residues: Small ribosomal subunit protein uS8 (130 aa).

It belongs to the universal ribosomal protein uS8 family. Part of the 30S ribosomal subunit.

Its function is as follows. One of the primary rRNA binding proteins, it binds directly to 16S rRNA central domain where it helps coordinate assembly of the platform of the 30S subunit. In Methanopyrus kandleri (strain AV19 / DSM 6324 / JCM 9639 / NBRC 100938), this protein is Small ribosomal subunit protein uS8.